Consider the following 419-residue polypeptide: MPGTQTCIQNSRWTVVNLKNAFQAEGPWEFVLGNNSRSYLNLKRTYLVYTFNITDQNGAIVNIPNPITKDSLVYAPINNIAHSIVKNFSLHINSQLAYHNSSNYAYKAYFENALMYGKEIKNSTLTAAGYFHEDEIGTPTSKGFLNRCGTGTTQVAANISLDLMNQPRVLLNSCNVKLTAYPNNSEFLIEAYNHGQQKFKFNVTDVYALVNEFDLTDGLSNELEAAIIEHKMIQYPMISSQVRSFYIDGGRFDAPANTLFTSKMPRRLFLGLVSSEAYNGSFGTTPFNFKPYGVTDVHIDYCGQTIPGRPMNLDFENNKFVEAYVQLQETLGHTRNNFSCNSIDIGMFRSKGYTIFGFELSPVAQDNNLFELVRQTNVSVRLNFKKETPPGGLYCVVYAEFDQIFSLDFMRNPIVDSIV.

This is an uncharacterized protein from Caenorhabditis elegans.